Consider the following 285-residue polypeptide: Cell division protein DivIB (285 aa).

A compositionally biased stretch (basic and acidic residues) spans 1–19 (MNEKNKNDESKHQEDKLQD). The segment at 1–20 (MNEKNKNDESKHQEDKLQDQ) is disordered. Residues 1–66 (MNEKNKNDES…NRFNAMERNS (66 aa)) are Cytoplasmic-facing. The chain crosses the membrane as a helical span at residues 67–87 (IHMIVILSIISLLLILLLSPL). The 71-residue stretch at 88–158 (MRFQKVEITG…QVAQIKIEEN (71 aa)) folds into the POTRA domain. The Extracellular segment spans residues 88 to 285 (MRFQKVEITG…FQVGTYFQQY (198 aa)).

It belongs to the FtsQ/DivIB family. DivIB subfamily.

The protein localises to the cell membrane. Cell division protein that may be involved in stabilizing or promoting the assembly of the division complex. This Weissella koreensis (strain KACC 15510) protein is Cell division protein DivIB.